The following is a 287-amino-acid chain: Pantothenate synthetase (287 aa).

37-44 (MGALHEGH) contacts ATP. The Proton donor role is filled by His-44. Gln-68 is a (R)-pantoate binding site. A beta-alanine-binding site is contributed by Gln-68. Residue 154–157 (GQKD) participates in ATP binding. Gln-160 provides a ligand contact to (R)-pantoate. ATP is bound by residues Val-183 and 191–194 (LSSR).

Belongs to the pantothenate synthetase family. Homodimer.

It localises to the cytoplasm. It carries out the reaction (R)-pantoate + beta-alanine + ATP = (R)-pantothenate + AMP + diphosphate + H(+). It participates in cofactor biosynthesis; (R)-pantothenate biosynthesis; (R)-pantothenate from (R)-pantoate and beta-alanine: step 1/1. In terms of biological role, catalyzes the condensation of pantoate with beta-alanine in an ATP-dependent reaction via a pantoyl-adenylate intermediate. This chain is Pantothenate synthetase, found in Leifsonia xyli subsp. xyli (strain CTCB07).